A 249-amino-acid polypeptide reads, in one-letter code: UDP-N-acetyl-D-mannosaminuronic acid transferase (249 aa).

It belongs to the glycosyltransferase 26 family.

The catalysed reaction is UDP-N-acetyl-alpha-D-mannosaminouronate + N-acetyl-alpha-D-glucosaminyl-di-trans,octa-cis-undecaprenyl diphosphate = beta-D-ManNAcA-(1-&gt;4)-alpha-D-GlcNAc-di-trans,octa-cis-undecaprenyl diphosphate + UDP + H(+). Its pathway is bacterial outer membrane biogenesis; enterobacterial common antigen biosynthesis. In terms of biological role, catalyzes the synthesis of Und-PP-GlcNAc-ManNAcA (Lipid II), the second lipid-linked intermediate involved in enterobacterial common antigen (ECA) synthesis. This chain is UDP-N-acetyl-D-mannosaminuronic acid transferase, found in Pectobacterium carotovorum subsp. carotovorum (strain PC1).